Consider the following 436-residue polypeptide: uncharacterized protein (436 aa).

This is an uncharacterized protein from Diadromus pulchellus (Parasitic wasp).